We begin with the raw amino-acid sequence, 248 residues long: Triosephosphate isomerase (248 aa).

Substrate contacts are provided by Asn-10 and Lys-12. His-95 functions as the Electrophile in the catalytic mechanism. The active-site Proton acceptor is the Glu-165.

It belongs to the triosephosphate isomerase family. As to quaternary structure, homodimer.

Its subcellular location is the cytoplasm. It carries out the reaction D-glyceraldehyde 3-phosphate = dihydroxyacetone phosphate. The protein operates within carbohydrate biosynthesis; gluconeogenesis. It participates in carbohydrate degradation; glycolysis; D-glyceraldehyde 3-phosphate from glycerone phosphate: step 1/1. The chain is Triosephosphate isomerase (TPI1) from Candida albicans (strain SC5314 / ATCC MYA-2876) (Yeast).